A 387-amino-acid polypeptide reads, in one-letter code: Short-chain dehydrogenase/reductase family 42E member 1 (387 aa).

Tyrosine 149 functions as the Proton acceptor in the catalytic mechanism. Lysine 153 serves as a coordination point for NAD(+). The next 2 membrane-spanning stretches (helical) occupy residues 279-299 and 365-385; these read LPISMIYFFAFLTEMVHFVVG and ILDVFVVVAFVAVLLSCLPVV.

It belongs to the 3-beta-HSD family.

It localises to the membrane. The chain is Short-chain dehydrogenase/reductase family 42E member 1 (sdr42e1) from Danio rerio (Zebrafish).